A 208-amino-acid polypeptide reads, in one-letter code: Probable transcriptional regulator ycf29 (208 aa).

One can recognise a Response regulatory domain in the interval 11–118 (KLILIEPEEH…ELIAIISNLI (108 aa)). Residue D60 is modified to 4-aspartylphosphate. Residues 146–208 (TSFSYINLTV…NRIQILSYFN (63 aa)) form the HTH luxR-type domain.

The protein resides in the plastid. It localises to the chloroplast. This chain is Probable transcriptional regulator ycf29 (ycf29), found in Guillardia theta (Cryptophyte).